The primary structure comprises 151 residues: MSLRRTILDLHRQTQRATLSKSLPFSMSHISSASATAAVRNPLGRDLSSIPFAQAQKLKPDSTNLVTDRSISSSIGQSELNKAAKFSRQSSSRGYTNGSFLRKIPVVFHIHEGMEEILADYVHQEMTRNLIVMSLGLFQIIVLKDIILFLL.

A mitochondrion-targeting transit peptide spans 1-78 (MSLRRTILDL…RSISSSIGQS (78 aa)). His109 is a heme binding site. A ubiquinone is bound at residue Tyr121. Residues 130 to 150 (LIVMSLGLFQIIVLKDIILFL) traverse the membrane as a helical segment.

Component of complex II composed of eight subunits in plants: four classical SDH subunits SDH1, SDH2, SDH3 and SDH4 (a flavoprotein (FP), an iron-sulfur protein (IP), and a cytochrome b composed of a large and a small subunit.), as well as four subunits unknown in mitochondria from bacteria and heterotrophic eukaryotes. Heme is required as a cofactor. In terms of tissue distribution, expressed in flowers, inflorescences and stems.

The protein resides in the mitochondrion inner membrane. It participates in carbohydrate metabolism; tricarboxylic acid cycle. In terms of biological role, membrane-anchoring subunit of succinate dehydrogenase (SDH). The protein is Succinate dehydrogenase subunit 4, mitochondrial of Arabidopsis thaliana (Mouse-ear cress).